The chain runs to 324 residues: Lipoyl synthase (324 aa).

Residues Cys-71, Cys-76, Cys-82, Cys-97, Cys-101, Cys-104, and Ser-311 each contribute to the [4Fe-4S] cluster site. The Radical SAM core domain occupies 83–300 (FGHGTATFLI…GDKAREMGFT (218 aa)).

This sequence belongs to the radical SAM superfamily. Lipoyl synthase family. The cofactor is [4Fe-4S] cluster.

The protein resides in the cytoplasm. It catalyses the reaction [[Fe-S] cluster scaffold protein carrying a second [4Fe-4S](2+) cluster] + N(6)-octanoyl-L-lysyl-[protein] + 2 oxidized [2Fe-2S]-[ferredoxin] + 2 S-adenosyl-L-methionine + 4 H(+) = [[Fe-S] cluster scaffold protein] + N(6)-[(R)-dihydrolipoyl]-L-lysyl-[protein] + 4 Fe(3+) + 2 hydrogen sulfide + 2 5'-deoxyadenosine + 2 L-methionine + 2 reduced [2Fe-2S]-[ferredoxin]. Its pathway is protein modification; protein lipoylation via endogenous pathway; protein N(6)-(lipoyl)lysine from octanoyl-[acyl-carrier-protein]: step 2/2. Its function is as follows. Catalyzes the radical-mediated insertion of two sulfur atoms into the C-6 and C-8 positions of the octanoyl moiety bound to the lipoyl domains of lipoate-dependent enzymes, thereby converting the octanoylated domains into lipoylated derivatives. This Nitrosococcus oceani (strain ATCC 19707 / BCRC 17464 / JCM 30415 / NCIMB 11848 / C-107) protein is Lipoyl synthase.